Reading from the N-terminus, the 534-residue chain is Nucleolar protein 58 (534 aa).

Thr34 is subject to Phosphothreonine. Ser109 is subject to Phosphoserine. Residue Lys157 forms a Glycyl lysine isopeptide (Lys-Gly) (interchain with G-Cter in SUMO2) linkage. The Nop domain maps to 282–400 (IAPNVTVMVG…LEARLRILED (119 aa)). A phosphoserine mark is found at Ser304 and Ser351. Glycyl lysine isopeptide (Lys-Gly) (interchain with G-Cter in SUMO2) cross-links involve residues Lys353, Lys411, Lys415, Lys422, Lys426, Lys441, Lys444, and Lys465. Residue Lys467 forms a Glycyl lysine isopeptide (Lys-Gly) (interchain with G-Cter in SUMO); alternate linkage. Lys467 is covalently cross-linked (Glycyl lysine isopeptide (Lys-Gly) (interchain with G-Cter in SUMO1); alternate). Residue Lys467 forms a Glycyl lysine isopeptide (Lys-Gly) (interchain with G-Cter in SUMO2); alternate linkage. Residues 470–486 (VEEEMEEAEEEQVVEEE) are compositionally biased toward acidic residues. The segment at 470–534 (VEEEMEEAEE…KKKKKKDAED (65 aa)) is disordered. A Glycyl lysine isopeptide (Lys-Gly) (interchain with G-Cter in SUMO2) cross-link involves residue Lys490. The span at 490-500 (KKKKKKDKKKH) shows a compositional bias: basic residues. Lys502 is covalently cross-linked (Glycyl lysine isopeptide (Lys-Gly) (interchain with G-Cter in SUMO); alternate). Residue Lys502 forms a Glycyl lysine isopeptide (Lys-Gly) (interchain with G-Cter in SUMO2); alternate linkage. Ser507 and Ser519 each carry phosphoserine. Positions 522–534 (KKKKKKKKKDAED) are enriched in basic residues.

The protein belongs to the NOP5/NOP56 family. In terms of assembly, core component of box C/D small nucleolar ribonucleoprotein (snoRNP) particles; the core proteins SNU13, NOP56, NOP58 and FBL or FBLL1 assemble stepwise onto the snoRNA. Interacts with NOLC1/Nopp140. Interacts with NOPCHAP1, NUFIP1, RUVBL1 and RUVBL2; NOPCHAP1 bridges the association of NOP58 with RUVBL1:RUVBL2 and NUFIP1. Interacts with PIH1D1. Part of the small subunit (SSU) processome, composed of more than 70 proteins and the RNA chaperone small nucleolar RNA (snoRNA) U3. Post-translationally, sumoylation is essential for high-affinity binding to snoRNAs.

Its subcellular location is the nucleus. The protein resides in the nucleolus. It is found in the nucleoplasm. Required for the biogenesis of box C/D snoRNAs such as U3, U8 and U14 snoRNAs. Part of the small subunit (SSU) processome, first precursor of the small eukaryotic ribosomal subunit. During the assembly of the SSU processome in the nucleolus, many ribosome biogenesis factors, an RNA chaperone and ribosomal proteins associate with the nascent pre-rRNA and work in concert to generate RNA folding, modifications, rearrangements and cleavage as well as targeted degradation of pre-ribosomal RNA by the RNA exosome. Core component of box C/D small nucleolar ribonucleoprotein (snoRNP) complexes that function in methylation of multiple sites on ribosomal RNAs (rRNAs) and messenger RNAs (mRNAs). This chain is Nucleolar protein 58 (Nop58), found in Rattus norvegicus (Rat).